Here is a 64-residue protein sequence, read N- to C-terminus: MKQKTHSGIKKRIKKTGSGKLRREQANRRHLLEGKPSTRTRRLKGDTSVSRNDTKRVNRLLGEG.

The span at 1–17 (MKQKTHSGIKKRIKKTG) shows a compositional bias: basic residues. The interval 1–64 (MKQKTHSGIK…KRVNRLLGEG (64 aa)) is disordered. Basic and acidic residues predominate over residues 21 to 33 (LRREQANRRHLLE).

Belongs to the bacterial ribosomal protein bL35 family.

This Corynebacterium kroppenstedtii (strain DSM 44385 / JCM 11950 / CIP 105744 / CCUG 35717) protein is Large ribosomal subunit protein bL35.